The chain runs to 224 residues: MRLVIARCRVDYVGRLTAHLPTARRLLLIKADGSVSIHADDRAYKPLNWMSPPCWLVEDTVEDAEALWVVTNKAGEELRITIEEIEHDSSHELGVDPGLVKDGVEAHLQELLAEHVETLGSGYTLVRREYMTAIGPVDLLCRNADGASVAVEIKRRGDIDGVEQLTRYLELLNRDPLLAPVSGVFAAQQIKPQAKTLATDRGIRCLVLDYEALRGTESTEFRLF.

This sequence belongs to the NucS endonuclease family.

It localises to the cytoplasm. Its function is as follows. Cleaves both 3' and 5' ssDNA extremities of branched DNA structures. The sequence is that of Endonuclease NucS from Rhodococcus jostii (strain RHA1).